We begin with the raw amino-acid sequence, 794 residues long: Sucrose synthase (794 aa).

Positions 263–742 are GT-B glycosyltransferase; it reads MISRLLILSP…ALDRVASRYT (480 aa).

The protein belongs to the glycosyltransferase 1 family. In terms of assembly, homotetramer.

The enzyme catalyses an NDP-alpha-D-glucose + D-fructose = a ribonucleoside 5'-diphosphate + sucrose + H(+). The catalysed reaction is ADP-alpha-D-glucose + D-fructose = sucrose + ADP + H(+). Inhibited by GDP over 10 mM and by over 2 mM MgCl(2). Its function is as follows. Catalyzes the reversible conversion of sucrose and a nucleotide disphosphate (NDP) into fructose and NDP-glucose; although the reaction is freely reversible in vitro, the physiological reaction seems to be sucrose cleavage. Unlike characterized plant enzymes prefers ADP as a cosubstrate, whereas plants prefer UDP. The KM for sucrose is 8-fold lower in the presence of ADP than UDP. Its preference for ADP over UDP suggests it may directly link sucrose and glycogen metabolism. In Nitrosomonas europaea (strain ATCC 19718 / CIP 103999 / KCTC 2705 / NBRC 14298), this protein is Sucrose synthase (ss2).